Consider the following 118-residue polypeptide: Ribonuclease P protein component (118 aa).

Belongs to the RnpA family. As to quaternary structure, consists of a catalytic RNA component (M1 or rnpB) and a protein subunit.

The catalysed reaction is Endonucleolytic cleavage of RNA, removing 5'-extranucleotides from tRNA precursor.. RNaseP catalyzes the removal of the 5'-leader sequence from pre-tRNA to produce the mature 5'-terminus. It can also cleave other RNA substrates such as 4.5S RNA. The protein component plays an auxiliary but essential role in vivo by binding to the 5'-leader sequence and broadening the substrate specificity of the ribozyme. In Rickettsia rickettsii (strain Iowa), this protein is Ribonuclease P protein component.